The primary structure comprises 224 residues: Thiamine-phosphate synthase (224 aa).

4-amino-2-methyl-5-(diphosphooxymethyl)pyrimidine-binding positions include 41–45 (QFRDK) and aspartate 77. Aspartate 78 and aspartate 97 together coordinate Mg(2+). Position 116 (serine 116) interacts with 4-amino-2-methyl-5-(diphosphooxymethyl)pyrimidine. Residue 143–145 (TNS) coordinates 2-[(2R,5Z)-2-carboxy-4-methylthiazol-5(2H)-ylidene]ethyl phosphate. Lysine 146 lines the 4-amino-2-methyl-5-(diphosphooxymethyl)pyrimidine pocket. Residues glycine 174 and 194-195 (IS) contribute to the 2-[(2R,5Z)-2-carboxy-4-methylthiazol-5(2H)-ylidene]ethyl phosphate site.

Belongs to the thiamine-phosphate synthase family. Requires Mg(2+) as cofactor.

The enzyme catalyses 2-[(2R,5Z)-2-carboxy-4-methylthiazol-5(2H)-ylidene]ethyl phosphate + 4-amino-2-methyl-5-(diphosphooxymethyl)pyrimidine + 2 H(+) = thiamine phosphate + CO2 + diphosphate. The catalysed reaction is 2-(2-carboxy-4-methylthiazol-5-yl)ethyl phosphate + 4-amino-2-methyl-5-(diphosphooxymethyl)pyrimidine + 2 H(+) = thiamine phosphate + CO2 + diphosphate. It carries out the reaction 4-methyl-5-(2-phosphooxyethyl)-thiazole + 4-amino-2-methyl-5-(diphosphooxymethyl)pyrimidine + H(+) = thiamine phosphate + diphosphate. Its pathway is cofactor biosynthesis; thiamine diphosphate biosynthesis; thiamine phosphate from 4-amino-2-methyl-5-diphosphomethylpyrimidine and 4-methyl-5-(2-phosphoethyl)-thiazole: step 1/1. Condenses 4-methyl-5-(beta-hydroxyethyl)thiazole monophosphate (THZ-P) and 2-methyl-4-amino-5-hydroxymethyl pyrimidine pyrophosphate (HMP-PP) to form thiamine monophosphate (TMP). The polypeptide is Thiamine-phosphate synthase (Latilactobacillus sakei subsp. sakei (strain 23K) (Lactobacillus sakei subsp. sakei)).